The primary structure comprises 329 residues: MITTLLRRSLLDASKQATSINGILFHQLAPAKYFRVPAVGGLRDFSKMTFEKKKTSEEEEGSGDGVKVNDQGNKGEQLIVSYWGVKPMKITKEDGTEWKWSCFRPWETYKADLTIDLKKHHVPSTLPDKIAYWMVKSLRWPTDLFFQRRYGCRAIMLETVAAVPGMVGGMLMHFKSLRRFEQSGGWIKALLEEAENERMHLMTFMEVAKPKWYERALVISVQGVFFNAYLIGYIISPKFAHRMVGYLEEEAIHSYTEFLKELDNGNIENVPAPAIAVDYWRLEADATLRDVVMVVRADEAHHRDVNHYASDIHYQGHELKEAPAPIGYH.

The N-terminal 45 residues, 1–45 (MITTLLRRSLLDASKQATSINGILFHQLAPAKYFRVPAVGGLRDF), are a transit peptide targeting the mitochondrion. Residues 154–174 (AIMLETVAAVPGMVGGMLMHF) form a helical membrane-spanning segment. Positions 158, 197, and 200 each coordinate Fe cation. A helical transmembrane segment spans residues 216–236 (ALVISVQGVFFNAYLIGYIIS). Positions 248, 299, and 302 each coordinate Fe cation.

It belongs to the alternative oxidase family. As to quaternary structure, homodimer; disulfide-linked. The cofactor is Fe cation. Expressed in roots, stems, leaves, cotyledons and flowers. High expression in stamens.

Its subcellular location is the mitochondrion inner membrane. The enzyme catalyses 2 a ubiquinol + O2 = 2 a ubiquinone + 2 H2O. Its function is as follows. Catalyzes the cyanide-resistant oxidation of ubiquinol and the reduction of molecular oxygen to water, but does not translocate protons and consequently is not linked to oxidative phosphorylation. May increase respiration when the cytochrome respiratory pathway is restricted, or in response to low temperatures. This is Ubiquinol oxidase 1c, mitochondrial (AOX1C) from Arabidopsis thaliana (Mouse-ear cress).